Consider the following 137-residue polypeptide: Putative pre-16S rRNA nuclease (137 aa).

Belongs to the YqgF nuclease family.

The protein localises to the cytoplasm. Its function is as follows. Could be a nuclease involved in processing of the 5'-end of pre-16S rRNA. The polypeptide is Putative pre-16S rRNA nuclease (Clostridium perfringens (strain ATCC 13124 / DSM 756 / JCM 1290 / NCIMB 6125 / NCTC 8237 / Type A)).